A 103-amino-acid chain; its full sequence is Non-histone chromosomal protein HMG-14B (103 aa).

Residues 1–103 (MPKRKVAASR…AVEKEEVKSE (103 aa)) form a disordered region. A compositionally biased stretch (basic and acidic residues) spans 29–50 (VPDKAEPKAKALAAKDKSENKK). Positions 51–60 (AQSKGKKGPK) are enriched in basic residues. Over residues 94-103 (AVEKEEVKSE) the composition is skewed to basic and acidic residues.

Belongs to the HMGN family.

Its subcellular location is the nucleus. Functionally, binds to the inner side of the nucleosomal DNA thus altering the interaction between the DNA and the histone octamer. May be involved in the process which maintains transcribable genes in a unique chromatin conformation. This is Non-histone chromosomal protein HMG-14B (HMG14) from Gallus gallus (Chicken).